The chain runs to 338 residues: D-xylulose reductase (338 aa).

Cys40, His65, and Glu151 together coordinate Zn(2+).

It belongs to the zinc-containing alcohol dehydrogenase family. In terms of assembly, homotetramer. It depends on Zn(2+) as a cofactor.

The catalysed reaction is xylitol + NAD(+) = D-xylulose + NADH + H(+). This is D-xylulose reductase from Morganella morganii (Proteus morganii).